We begin with the raw amino-acid sequence, 324 residues long: Glyoxylate/hydroxypyruvate reductase B (324 aa).

Catalysis depends on residues arginine 237 and glutamate 266. Catalysis depends on histidine 285, which acts as the Proton donor.

It belongs to the D-isomer specific 2-hydroxyacid dehydrogenase family. GhrB subfamily. Homodimer.

The protein localises to the cytoplasm. The catalysed reaction is glycolate + NADP(+) = glyoxylate + NADPH + H(+). The enzyme catalyses (R)-glycerate + NAD(+) = 3-hydroxypyruvate + NADH + H(+). It carries out the reaction (R)-glycerate + NADP(+) = 3-hydroxypyruvate + NADPH + H(+). Its function is as follows. Catalyzes the NADPH-dependent reduction of glyoxylate and hydroxypyruvate into glycolate and glycerate, respectively. This chain is Glyoxylate/hydroxypyruvate reductase B, found in Salmonella schwarzengrund (strain CVM19633).